The primary structure comprises 78 residues: Sec-independent protein translocase protein TatA (78 aa).

Residues 1–21 (MGSLSIWHWLIVLLIVALVFG) form a helical membrane-spanning segment. Basic and acidic residues-rich tracts occupy residues 39–57 (FKEG…RDQL) and 65–78 (VDAK…GDSR). The interval 39–78 (FKEGMKDGETPEGQQRDQLSRTNTVDVDAKEKAPHSGDSR) is disordered.

The protein belongs to the TatA/E family. The Tat system comprises two distinct complexes: a TatABC complex, containing multiple copies of TatA, TatB and TatC subunits, and a separate TatA complex, containing only TatA subunits. Substrates initially bind to the TatABC complex, which probably triggers association of the separate TatA complex to form the active translocon.

The protein localises to the cell inner membrane. Its function is as follows. Part of the twin-arginine translocation (Tat) system that transports large folded proteins containing a characteristic twin-arginine motif in their signal peptide across membranes. TatA could form the protein-conducting channel of the Tat system. The sequence is that of Sec-independent protein translocase protein TatA from Paraburkholderia phymatum (strain DSM 17167 / CIP 108236 / LMG 21445 / STM815) (Burkholderia phymatum).